We begin with the raw amino-acid sequence, 97 residues long: Citrate lyase acyl carrier protein (97 aa).

O-(phosphoribosyl dephospho-coenzyme A)serine is present on Ser14.

The protein belongs to the CitD family. In terms of assembly, oligomer with a subunit composition of (alpha,beta,gamma)6.

The protein resides in the cytoplasm. In terms of biological role, covalent carrier of the coenzyme of citrate lyase. The polypeptide is Citrate lyase acyl carrier protein (Escherichia fergusonii (strain ATCC 35469 / DSM 13698 / CCUG 18766 / IAM 14443 / JCM 21226 / LMG 7866 / NBRC 102419 / NCTC 12128 / CDC 0568-73)).